Consider the following 425-residue polypeptide: Pyruvate dehydrogenase E1 component subunit alpha-3, chloroplastic (425 aa).

The transit peptide at 1–66 (MAAASSFTAA…VLPGNKAAPA (66 aa)) directs the protein to the chloroplast. The pyruvate site is built by H109, Y135, R136, A184, I186, D224, G225, and N253. Y135, R136, A184, I186, D224, G225, N253, and H322 together coordinate thiamine diphosphate. D224 contacts Mg(2+). Mg(2+) is bound at residue N253.

As to quaternary structure, tetramer of 2 alpha and 2 beta subunits. It depends on thiamine diphosphate as a cofactor. The cofactor is Mg(2+).

Its subcellular location is the plastid. The protein localises to the chloroplast. It carries out the reaction N(6)-[(R)-lipoyl]-L-lysyl-[protein] + pyruvate + H(+) = N(6)-[(R)-S(8)-acetyldihydrolipoyl]-L-lysyl-[protein] + CO2. The pyruvate dehydrogenase complex catalyzes the overall conversion of pyruvate to acetyl-CoA and CO(2). It contains multiple copies of three enzymatic components: pyruvate dehydrogenase (E1), dihydrolipoamide acetyltransferase (E2) and lipoamide dehydrogenase (E3). In Oryza sativa subsp. japonica (Rice), this protein is Pyruvate dehydrogenase E1 component subunit alpha-3, chloroplastic.